The primary structure comprises 86 residues: MKFLLIGLIRFYQYAISPLIGPRCRFYPSCSHYTLEAIRVHGALRGGYLGARRLLRCHPWHPGGYDPVPERQEQACACHRTAKPGE.

It belongs to the UPF0161 family.

The protein resides in the cell inner membrane. Could be involved in insertion of integral membrane proteins into the membrane. This chain is Putative membrane protein insertion efficiency factor, found in Pseudomonas aeruginosa (strain UCBPP-PA14).